The sequence spans 217 residues: Variable small protein 22 (217 aa).

An N-terminal signal peptide occupies residues 1–18 (MRKRISAIIMTLFMVFMS). Cys-19 carries N-palmitoyl cysteine lipidation. Cys-19 carries the S-diacylglycerol cysteine lipid modification. A disordered region spans residues 151-174 (LGKNDASDDDTKKAIKKDNSDKTK). The segment covering 155–174 (DASDDDTKKAIKKDNSDKTK) has biased composition (basic and acidic residues).

This sequence belongs to the variable small protein (Vsp) family.

Its subcellular location is the cell outer membrane. The Vlp and Vsp proteins are antigenically distinct proteins, only one vlp or vsp gene is transcriptionally active at any one time. Switching between these genes is a mechanism of host immune response evasion. The sequence is that of Variable small protein 22 from Borrelia hermsii.